Reading from the N-terminus, the 84-residue chain is Small ribosomal subunit protein uS17 (84 aa).

This sequence belongs to the universal ribosomal protein uS17 family. Part of the 30S ribosomal subunit.

In terms of biological role, one of the primary rRNA binding proteins, it binds specifically to the 5'-end of 16S ribosomal RNA. The protein is Small ribosomal subunit protein uS17 of Clostridium novyi (strain NT).